Consider the following 1032-residue polypeptide: Serine/threonine-protein kinase ppk31 (1032 aa).

A PAS domain is found at 3–72 (NPEQLKRILS…KATDNLFRKS (70 aa)). Residues 528–877 (FILLKEINRG…YQEIKKHPFF (350 aa)) form the Protein kinase domain. ATP contacts are provided by residues 534–542 (INRGAYGRV) and lysine 557. Aspartate 652 functions as the Proton acceptor in the catalytic mechanism. The tract at residues 938 to 963 (PKATPADSGTETSNSAAFSASEEETT) is disordered. Over residues 947–957 (TETSNSAAFSA) the composition is skewed to low complexity.

Belongs to the protein kinase superfamily. Ser/Thr protein kinase family.

Its subcellular location is the cytoplasm. It carries out the reaction L-seryl-[protein] + ATP = O-phospho-L-seryl-[protein] + ADP + H(+). The enzyme catalyses L-threonyl-[protein] + ATP = O-phospho-L-threonyl-[protein] + ADP + H(+). Functionally, has a role in meiosis. This is Serine/threonine-protein kinase ppk31 (ppk31) from Schizosaccharomyces pombe (strain 972 / ATCC 24843) (Fission yeast).